Consider the following 589-residue polypeptide: 3-(3-hydroxy-phenyl)propionate/3-hydroxycinnamic acid hydroxylase (589 aa).

Residues 15–44 and 283–293 each bind FAD; these read DVLI…VAEK and FRVDRILLAGD.

Belongs to the PheA/TfdB FAD monooxygenase family. Requires FAD as cofactor.

It carries out the reaction 3-(3-hydroxyphenyl)propanoate + NADH + O2 + H(+) = 3-(2,3-dihydroxyphenyl)propanoate + NAD(+) + H2O. The enzyme catalyses (2E)-3-(3-hydroxyphenyl)prop-2-enoate + NADH + O2 + H(+) = (2E)-3-(2,3-dihydroxyphenyl)prop-2-enoate + NAD(+) + H2O. The protein operates within aromatic compound metabolism; 3-phenylpropanoate degradation. Functionally, catalyzes the insertion of one atom of molecular oxygen into position 2 of the phenyl ring of 3-(3-hydroxyphenyl)propionate (3-HPP) and hydroxycinnamic acid (3HCI). This is 3-(3-hydroxy-phenyl)propionate/3-hydroxycinnamic acid hydroxylase from Comamonas testosteroni (Pseudomonas testosteroni).